A 533-amino-acid polypeptide reads, in one-letter code: MELGDTTSVIPDSFMGYRDDITMQMSMVLDQIRAPLIVPALRLGVYICLTMSVMLFVERVYMGIVISLVKLFGRKPDKRFKYEPIKDDIELGNSAYPMVLIQIPMFNEREVYQLSIGAACGLSWPSDRIVIQVLDDSTDPTIKDLVEMECSRWASKGVNIKYEIRDNRNGYKAGALKEGMKKSYVKSCDYVAIFDADFQPEADFLWRTVPYLLHNPKLALVQARWKFVNSDECLMTRMQEMSLDYHFTVEQEVGSSTYAFFGFNGTAGIWRISALNEAGGWKDRTTVEDMDLAVRASLKGWKFLYLGSLKVKNELPSTFKAYRYQQHRWSCGPANLFRKMAFEIMTNKNVTLWKKVHVIYSFFVVRKLVAHIVTFIFYCVILPATVLVPEVTVPKWGAVYIPSVITLLNAVGTPRSLHLMVFWILFENVMSLHRTKATFIGLLEGGRVNEWIVTEKLGDVKAKSATKTSKKVIRFRFGDRIHVLELGVGMYLLFVGCYDAFFGKNHYYLYLFAQAIAFFIAGFGQIGTIVPNH.

The helical transmembrane segment at 37–57 threads the bilayer; that stretch reads IVPALRLGVYICLTMSVMLFV. Residue aspartate 136 is part of the active site. 2 residues coordinate substrate: aspartate 195 and aspartate 197. The active site involves aspartate 289. The next 4 membrane-spanning stretches (helical) occupy residues 368–388, 404–426, 483–503, and 510–530; these read LVAH…TVLV, VITL…WILF, VLEL…AFFG, and YLFA…GTIV.

The protein belongs to the glycosyltransferase 2 family. Plant cellulose synthase-like A subfamily. As to expression, expressed in cotyledons at the base of the hypocotyls, in root elongation zone, lateral root primordia, vascular system of young leaves, abscission zone of the pedicle,.

It is found in the golgi apparatus membrane. The enzyme catalyses GDP-mannose + (glucomannan)n = GDP + (glucomannan)n+1.. In terms of biological role, possesses glucomannan synthase and mannan synthase activities in vitro. Mannan synthase consists of a 4-beta-mannosyltransferase activity on mannan using GDP-mannose. The beta-1,4-mannan product is the backbone for galactomannan synthesis by galactomannan galactosyltransferase. Galactomannan is a noncellulosic polysaccharides of plant cell wall. Required for lateral root development. This chain is Glucomannan 4-beta-mannosyltransferase 9, found in Arabidopsis thaliana (Mouse-ear cress).